The primary structure comprises 394 residues: Protein NDRG1 (394 aa).

An N-acetylserine modification is found at S2. 3 positions are modified to phosphoserine: S2, S319, and S326. The segment at 325 to 394 (RSRTASGSSV…AGPKSMEVSC (70 aa)) is disordered. The span at 327-339 (RTASGSSVTSLDG) shows a compositional bias: polar residues. A Phosphothreonine; by SGK1 modification is found at T328. A phosphoserine; by SGK1 mark is found at S330 and S332. Position 333 is a phosphoserine (S333). T335 is subject to Phosphothreonine. At S336 the chain carries Phosphoserine. Tandem repeats lie at residues 339–348 (GTRSRSHTSE), 349–358 (GTRSRSHTSE), and 359–368 (GTRSRSHTSE). The tract at residues 339-368 (GTRSRSHTSEGTRSRSHTSEGTRSRSHTSE) is 3 X 10 AA tandem repeats of G-[PST]-R-S-R-S-H-T-S-E. T340 is modified (phosphothreonine). Residue S342 is modified to Phosphoserine. Residues 345–371 (HTSEGTRSRSHTSEGTRSRSHTSEGAH) show a composition bias toward basic and acidic residues. Residue T346 is modified to Phosphothreonine; by SGK1. The residue at position 352 (S352) is a Phosphoserine. At T356 the chain carries Phosphothreonine; by SGK1. Residues S362 and S364 each carry the phosphoserine modification. 2 positions are modified to phosphothreonine: T366 and T375.

This sequence belongs to the NDRG family. In terms of assembly, interacts with RAB4A (membrane-bound form); the interaction involves NDRG1 in vesicular recycling ofCDH1. Interacts with APOA1, APOA2, PRA1 and RTN1. In terms of processing, under stress conditions, phosphorylated in the C-terminal on many serine and threonine residues. Phosphorylated in vitro by PKA. Phosphorylation enhanced by increased intracellular cAMP levels. Homocysteine induces dephosphorylation. Phosphorylation by SGK1 is cell cycle dependent.

The protein resides in the cytoplasm. It is found in the cytosol. The protein localises to the cytoskeleton. Its subcellular location is the microtubule organizing center. It localises to the centrosome. The protein resides in the nucleus. It is found in the cell membrane. Stress-responsive protein involved in hormone responses, cell growth, and differentiation. Acts as a tumor suppressor in many cell types. Necessary but not sufficient for p53/TP53-mediated caspase activation and apoptosis. Has a role in cell trafficking notably of the Schwann cell and is necessary for the maintenance and development of the peripheral nerve myelin sheath. Required for vesicular recycling of CDH1 and TF. May also function in lipid trafficking. Protects cells from spindle disruption damage. Functions in p53/TP53-dependent mitotic spindle checkpoint. Regulates microtubule dynamics and maintains euploidy. The polypeptide is Protein NDRG1 (Ndrg1) (Macaca fascicularis (Crab-eating macaque)).